Consider the following 410-residue polypeptide: D-amino acid dehydrogenase (410 aa).

9 to 14 (GGGIVG) lines the FAD pocket.

It belongs to the DadA oxidoreductase family. The cofactor is FAD.

It localises to the cell inner membrane. It carries out the reaction a D-alpha-amino acid + a quinone + H2O = a 2-oxocarboxylate + a quinol + NH4(+). In terms of biological role, catalyzes the oxidative deamination of D-amino acids. Has broad substrate specificity; is mostly active on D-proline, and to a lesser extent, on several other D-amino acids such as D-alanine, D-phenylalanine and D-serine. Mediates electron transport from D-proline to coenzyme Q1 in vitro, and is involved in the electron transport chain from D-proline to the c-type cytochrome in vivo. The chain is D-amino acid dehydrogenase from Helicobacter pylori (strain J99 / ATCC 700824) (Campylobacter pylori J99).